A 725-amino-acid chain; its full sequence is Glutamine-dependent NAD(+) synthetase (725 aa).

The CN hydrolase domain occupies 5–275 (VTVATCALNQ…VEVLTATLDL (271 aa)). The active-site Proton acceptor; for glutaminase activity is E45. The For glutaminase activity role is filled by K114. C175 functions as the Nucleophile; for glutaminase activity in the catalytic mechanism. Positions 325 to 706 (YHRPEEEISL…KTSQTLEEQI (382 aa)) are ligase. Residue 355–362 (PLSGGVDS) participates in ATP binding. S357 is a catalytic residue.

It in the C-terminal section; belongs to the NAD synthetase family. As to quaternary structure, homohexamer.

It catalyses the reaction deamido-NAD(+) + L-glutamine + ATP + H2O = L-glutamate + AMP + diphosphate + NAD(+) + H(+). The protein operates within cofactor biosynthesis; NAD(+) biosynthesis; NAD(+) from deamido-NAD(+) (L-Gln route): step 1/1. Its function is as follows. Catalyzes the final step of the nicotinamide adenine dinucleotide (NAD) de novo synthesis pathway, the ATP-dependent amidation of deamido-NAD using L-glutamine as a nitrogen source. In Rattus norvegicus (Rat), this protein is Glutamine-dependent NAD(+) synthetase (Nadsyn1).